A 155-amino-acid chain; its full sequence is Large ribosomal subunit protein eL24 (155 aa).

The disordered stretch occupies residues Ala92 to Arg155. A compositionally biased stretch (basic and acidic residues) spans Met96–Lys117. Low complexity predominate over residues Lys124–Lys133.

Belongs to the eukaryotic ribosomal protein eL24 family.

In Spodoptera frugiperda (Fall armyworm), this protein is Large ribosomal subunit protein eL24 (RpL24).